The primary structure comprises 420 residues: Acyl-coenzyme A amino acid N-acyltransferase 2 (420 aa).

Catalysis depends on charge relay system residues S235, D329, and H363. Residues 418–420 (SKL) carry the Microbody targeting signal motif.

This sequence belongs to the C/M/P thioester hydrolase family.

The protein resides in the peroxisome. Functionally, acyltransferase which efficiently conjugates very long-chain and long-chain fatty acids to taurine. Shows no conjugation activity in the presence of glycine. The chain is Acyl-coenzyme A amino acid N-acyltransferase 2 from Mus musculus (Mouse).